A 139-amino-acid polypeptide reads, in one-letter code: Small ribosomal subunit protein bS6 (139 aa).

Residues 97-139 (TEASPMAKAKDERDSRRSSEGERRSAPAEATEEVKETAEKAAE) form a disordered region. Positions 104-139 (KAKDERDSRRSSEGERRSAPAEATEEVKETAEKAAE) are enriched in basic and acidic residues.

Belongs to the bacterial ribosomal protein bS6 family.

Functionally, binds together with bS18 to 16S ribosomal RNA. In Shewanella sediminis (strain HAW-EB3), this protein is Small ribosomal subunit protein bS6.